Reading from the N-terminus, the 265-residue chain is UPF0354 protein ABC2771 (265 aa).

The protein belongs to the UPF0354 family.

The protein is UPF0354 protein ABC2771 of Shouchella clausii (strain KSM-K16) (Alkalihalobacillus clausii).